A 631-amino-acid polypeptide reads, in one-letter code: MPQAKNAPAASFDSLQTELDQKFAYPASSKTYIAGSRPDLRVPMRTIKQTATRTDQGEMLNPPIPVYDTSGPYSDPDVHIDLKAGLAPLRAKWIDERGDTVVLPSLSSEYGQARAHDPATAHLRFAQLTNPRRAKPGANVSQMHYARRGIITPEMEYVALRESLNLQALQDKPEYRKLLKQHPGFSYGANLPQRPEDITPEFVRQEIAAGRAIIPANINHVELEPMAIGRNFRVKINGNLGNSAVTSSLAEEVEKMVWSIRWGADTIMDLSTGKHIHETREWILRNSPVPIGTVPIYQALDKTGGVAEDLTWEMFRDTLIEQAEQGVDYFTIHAGVLLRYVPLTADRITGIVSRGGSIMAKWCLAHHKENFLYTHFDEICEIMKAYDVSFSLGDGLRPGCIADSNDAAQFGELYTLGELTKKAWEHDVQVMIEGPGHVPLQRVQANMDEELKHCFEAPFYTLGPLVTDIAPGYDHITSGIGAANIGWYGTAMLCYVTPKEHLGLPDKEDVREGIITYKIAAHAADLAKGWPGAQLRDNALSKARFEFRWEDQFNLGLDPEKARAFHDETLPAEGAKIAHFCSMCGPKFCSMKITQEVRDYAASLDANATAAEHGMEEKSIEFRKAGAKIYS.

Residues N239, M268, Y297, H333, S353–G355, D394–R397, and E433 each bind substrate. Zn(2+) is bound at residue H437. Residue Y460 participates in substrate binding. Residue H501 coordinates Zn(2+). Positions 581, 584, and 589 each coordinate [4Fe-4S] cluster.

Belongs to the ThiC family. As to quaternary structure, homodimer. The cofactor is [4Fe-4S] cluster.

It carries out the reaction 5-amino-1-(5-phospho-beta-D-ribosyl)imidazole + S-adenosyl-L-methionine = 4-amino-2-methyl-5-(phosphooxymethyl)pyrimidine + CO + 5'-deoxyadenosine + formate + L-methionine + 3 H(+). It functions in the pathway cofactor biosynthesis; thiamine diphosphate biosynthesis. Functionally, catalyzes the synthesis of the hydroxymethylpyrimidine phosphate (HMP-P) moiety of thiamine from aminoimidazole ribotide (AIR) in a radical S-adenosyl-L-methionine (SAM)-dependent reaction. This chain is Phosphomethylpyrimidine synthase, found in Ralstonia nicotianae (strain ATCC BAA-1114 / GMI1000) (Ralstonia solanacearum).